A 492-amino-acid polypeptide reads, in one-letter code: MKQKCVLIITDGIGYNKNSKFNAFEAAKKPSYEKLFKEVPNSLLKTSGLAVGLPEGQMGNSEVGHMCIGSGRIIYQNLVRINKAIENKELEKNENLQKLLAKCKRVHIIGLYSDGGVHSMDTHFKAMLEICAKNGNEVFAHAITDGRDVSPKSGLNFIKDLKGFCENLGVHFATLCGRFYAMDRDKRWDRVKEYYECLLGKAYKVPNLLEYLQKSYDENVTDEFIKAAQNENYKGMREEDGIIFINFRNDRMKQLVEVLNSKDFKEFEREKIFENLLTMSVYDDKFKLPVLFEKEKIENTLAQVISKAGLSQLHTAETEKYAHVTFFFNGGKEELLENETRVLIPSPKVKTYDEKPQMSAFEVCDAVKKGIEKGEDFIVVNFANGDMVGHTGDFNAAIKAVEAVDTCLGEIIECAKKHDYAFIITSDHGNCEAMQDEKGNLLTNHTTFDVFVFVQAKGVSKIKDNMGLSNIAASVLKILDLEIPKEMNEALF.

Mn(2+)-binding residues include D11 and S61. Catalysis depends on S61, which acts as the Phosphoserine intermediate. Substrate-binding positions include H118, 147–148, R178, R184, 248–251, and K320; these read RD and RNDR. Residues D386, H390, D427, H428, and H445 each coordinate Mn(2+).

The protein belongs to the BPG-independent phosphoglycerate mutase family. In terms of assembly, monomer. Mn(2+) is required as a cofactor.

The catalysed reaction is (2R)-2-phosphoglycerate = (2R)-3-phosphoglycerate. It functions in the pathway carbohydrate degradation; glycolysis; pyruvate from D-glyceraldehyde 3-phosphate: step 3/5. Its function is as follows. Catalyzes the interconversion of 2-phosphoglycerate and 3-phosphoglycerate. In Campylobacter jejuni (strain RM1221), this protein is 2,3-bisphosphoglycerate-independent phosphoglycerate mutase.